A 314-amino-acid polypeptide reads, in one-letter code: Acetaldehyde dehydrogenase 2 (314 aa).

15 to 18 serves as a coordination point for NAD(+); the sequence is SGNI. The active-site Acyl-thioester intermediate is the cysteine 133. Residues 164 to 172 and asparagine 291 contribute to the NAD(+) site; that span reads SAGPGTRAN.

It belongs to the acetaldehyde dehydrogenase family.

The enzyme catalyses acetaldehyde + NAD(+) + CoA = acetyl-CoA + NADH + H(+). This Pseudomonas putida (strain ATCC 700007 / DSM 6899 / JCM 31910 / BCRC 17059 / LMG 24140 / F1) protein is Acetaldehyde dehydrogenase 2.